Reading from the N-terminus, the 377-residue chain is MATKKKSSAANKGDDRQKALDAAMAMIEKDFGKGAVMRLGDDDRPPIQAISSGNTAIDIALGVGGFPRGRIVEIYGPESSGKTTVALHAIASAQKTGGIAAFIDAEHALDPEYARLLGVDTDNLLVSQPDTGEQALEIADMLVRSGAIDIIVIDSVAALTPKAEIEGEMGDSHVGLQARLMSQALRKMTGALYNSGTTAIFINQLREKIGVMFGSPETTTGGKALKFYASVRCDIRRIQTLKDGQDAIGNRTKLKVVKNKVSPPFKIAEFDIMYGEGISRESSIIDLGVEHGFIKKSGSWFTYEGDQLGQGKEKARNFLKDNPDLADEIEKKIFVKLGVGAAAAEAGEDVAMDVPGADDPLTDEAVDLVPNVDFDDD.

76 to 83 (GPESSGKT) contributes to the ATP binding site.

This sequence belongs to the RecA family.

It is found in the cytoplasm. In terms of biological role, can catalyze the hydrolysis of ATP in the presence of single-stranded DNA, the ATP-dependent uptake of single-stranded DNA by duplex DNA, and the ATP-dependent hybridization of homologous single-stranded DNAs. It interacts with LexA causing its activation and leading to its autocatalytic cleavage. This Corynebacterium aurimucosum (strain ATCC 700975 / DSM 44827 / CIP 107346 / CN-1) (Corynebacterium nigricans) protein is Protein RecA.